We begin with the raw amino-acid sequence, 657 residues long: Replication restart protein PriA (657 aa).

In terms of domain architecture, Helicase ATP-binding spans 143–309; the sequence is ITASTGARSF…LRGAVRRLPL (167 aa). ATP is bound at residue 156–163; that stretch reads GVTGSGKT. The DEAH box motif lies at 252-255; that stretch reads DEEH. Cys-366, Cys-369, Cys-375, Cys-378, Cys-393, Cys-396, Cys-406, and Cys-409 together coordinate Zn(2+). A Helicase C-terminal domain is found at 390-570; it reads AMQCHYCGRQ…PFVRLIRFVF (181 aa).

The protein belongs to the helicase family. PriA subfamily. In terms of assembly, component of the replication restart primosome. Zn(2+) is required as a cofactor.

It carries out the reaction Couples ATP hydrolysis with the unwinding of duplex DNA by translocating in the 3'-5' direction.. The catalysed reaction is ATP + H2O = ADP + phosphate + H(+). Its function is as follows. Initiates the restart of stalled replication forks, which reloads the replicative helicase on sites other than the origin of replication. Recognizes and binds to abandoned replication forks and remodels them to uncover a helicase loading site. Promotes assembly of the primosome at these replication forks. The protein is Replication restart protein PriA of Treponema pallidum (strain Nichols).